We begin with the raw amino-acid sequence, 390 residues long: 8-amino-7-oxononanoate synthase (390 aa).

Substrate is bound at residue arginine 20. 107–108 is a binding site for pyridoxal 5'-phosphate; it reads GF. Residue histidine 132 participates in substrate binding. Residues serine 179, 204-207, and 235-238 each bind pyridoxal 5'-phosphate; these read DDAH and TLSK. The residue at position 238 (lysine 238) is an N6-(pyridoxal phosphate)lysine. A substrate-binding site is contributed by threonine 352.

Belongs to the class-II pyridoxal-phosphate-dependent aminotransferase family. BioF subfamily. As to quaternary structure, homodimer. Pyridoxal 5'-phosphate is required as a cofactor.

It catalyses the reaction 6-carboxyhexanoyl-[ACP] + L-alanine + H(+) = (8S)-8-amino-7-oxononanoate + holo-[ACP] + CO2. It participates in cofactor biosynthesis; biotin biosynthesis. Functionally, catalyzes the decarboxylative condensation of pimeloyl-[acyl-carrier protein] and L-alanine to produce 8-amino-7-oxononanoate (AON), [acyl-carrier protein], and carbon dioxide. This is 8-amino-7-oxononanoate synthase from Exiguobacterium sibiricum (strain DSM 17290 / CCUG 55495 / CIP 109462 / JCM 13490 / 255-15).